A 129-amino-acid chain; its full sequence is UPF0102 protein amb4503 (129 aa).

This sequence belongs to the UPF0102 family.

The polypeptide is UPF0102 protein amb4503 (Paramagnetospirillum magneticum (strain ATCC 700264 / AMB-1) (Magnetospirillum magneticum)).